Consider the following 666-residue polypeptide: Pantothenate kinase 1 (666 aa).

This sequence belongs to the type II pantothenate kinase family.

The enzyme catalyses (R)-pantothenate + ATP = (R)-4'-phosphopantothenate + ADP + H(+). It functions in the pathway cofactor biosynthesis; coenzyme A biosynthesis; CoA from (R)-pantothenate: step 1/5. Its activity is regulated as follows. Regulated by feedback inhibition by malonyl-CoA. In terms of biological role, catalyzes the phosphorylation of pantothenate the first step in CoA biosynthesis. May play a role in the physiological regulation of the intracellular CoA concentration. This chain is Pantothenate kinase 1, found in Oryza sativa subsp. japonica (Rice).